A 1220-amino-acid chain; its full sequence is Plasma membrane calcium-transporting ATPase 1 (1220 aa).

At Gly2 the chain carries N-acetylglycine. The Cytoplasmic portion of the chain corresponds to 2 to 105 (GDMANNSVAY…KTFLQLVWEA (104 aa)). Phosphoserine occurs at positions 8 and 17. A helical transmembrane segment spans residues 106 to 126 (LQDVTLIILEIAAIVSLGLSF). The Extracellular segment spans residues 127-154 (YQPPEGDNALCGEVSVGEEEGEGETGWI). The chain crosses the membrane as a helical span at residues 155–175 (EGAAILLSVVCVVLVTAFNDW). At 176–366 (SKEKQFRGLQ…KEKSVLQGKL (191 aa)) the chain is on the cytoplasmic side. The tract at residues 297-356 (EEEKKDEKKKEKKNKKQDGAIENRNKAKAQDGAAMEMQPLKSEEGGDGDEKDKKKANLPK) is disordered. Composition is skewed to basic and acidic residues over residues 312–325 (KQDG…KAKA) and 337–356 (KSEE…NLPK). A Phosphoserine modification is found at Ser338. A helical membrane pass occupies residues 367 to 386 (TKLAVQIGKAGLLMSAITVI). The Extracellular segment spans residues 387–418 (ILVLYFVIDTFWVQKRPWLAECTPIYIQYFVK). The chain crosses the membrane as a helical span at residues 419-439 (FFIIGVTVLVVAVPEGLPLAV). The Cytoplasmic segment spans residues 440-855 (TISLAYSVKK…RNVYDSISKF (416 aa)). Residue Asp475 is the 4-aspartylphosphate intermediate of the active site. Positions 475, 477, and 797 each coordinate Mg(2+). A helical membrane pass occupies residues 856 to 876 (LQFQLTVNVVAVIVAFTGACI). Residues 877–882 (TQDSPL) are Extracellular-facing. Residues 883-903 (KAVQMLWVNLIMDTLASLALA) traverse the membrane as a helical segment. Residues 904–927 (TEPPTESLLLRKPYGRNKPLISRT) lie on the Cytoplasmic side of the membrane. A helical transmembrane segment spans residues 928-948 (MMKNILGHAFYQLVVVFTLLF). Topologically, residues 949–971 (AGEKFFDIDSGRNAPLHAPPSEH) are extracellular. Residues 972–991 (YTIVFNTFVLMQLFNEINAR) traverse the membrane as a helical segment. Over 992–1005 (KIHGERNVFEGIFN) the chain is Cytoplasmic. The chain crosses the membrane as a helical span at residues 1006–1027 (NAIFCTIVLGTFVVQIIIVQFG). The Extracellular portion of the chain corresponds to 1028-1039 (GKPFSCSELSIE). A helical membrane pass occupies residues 1040-1060 (QWLWSIFLGMGTLLWGQLIST). The Cytoplasmic segment spans residues 1061–1220 (IPTSRLKFLK…SPLHSLETSL (160 aa)). The segment at 1100–1117 (LRRGQILWFRGLNRIQTQ) is calmodulin-binding subdomain A. Thr1116 carries the phosphothreonine; by PKC modification. Residues 1118-1220 (IRVVNAFRSS…SPLHSLETSL (103 aa)) are required for basolateral membrane targeting. Ser1140 and Ser1155 each carry phosphoserine. Residues 1162–1220 (IDDTDAEDDAPTKRNSSPPPSPNKNNNAVDSGIHLTIEMNKSATSSSPGSPLHSLETSL) are disordered. Thr1165 carries the phosphothreonine modification. Residue Ser1177 is modified to Phosphoserine; by PKA. A phosphoserine mark is found at Ser1178 and Ser1182. The segment covering 1200–1220 (MNKSATSSSPGSPLHSLETSL) has biased composition (polar residues).

This sequence belongs to the cation transport ATPase (P-type) (TC 3.A.3) family. Type IIB subfamily. As to quaternary structure, monomer. Dimer. Oligomer. Calmodulin binding. Interacts with PDZD11. Interacts with SLC35G1 and STIM1. Interacts with YWHAE; interacts with the monomeric and dimeric forms of the YWHAE but prefer the monomer form; this interaction inhibits calcium-transporting ATPase activity. Interacts with NPTN; this interaction stabilizes ATP2B1 and increases ATPase activity; this interaction controls T cell calcium homeostasis following T cell activation. Interacts with EPB41; regulates small intestinal calcium absorption through regulation of membrane expression of ATP2B1. In terms of tissue distribution, isoform B is ubiquitously expressed. Isoforms A and E have only been found in brain cortex. Isoform C is found in brain cortex, skeletal muscle and heart muscle. Isoform D has only been found in fetal skeletal muscle. Isoform K has been found in small intestine and liver. Isoform B is expressed in hair cells of inner ear.

Its subcellular location is the cell membrane. The protein localises to the basolateral cell membrane. The protein resides in the synapse. It is found in the presynaptic cell membrane. It localises to the cytoplasmic vesicle. Its subcellular location is the secretory vesicle. The protein localises to the synaptic vesicle membrane. It catalyses the reaction Ca(2+)(in) + ATP + H2O = Ca(2+)(out) + ADP + phosphate + H(+). In terms of biological role, catalyzes the hydrolysis of ATP coupled with the transport of calcium from the cytoplasm to the extracellular space thereby maintaining intracellular calcium homeostasis. Plays a role in blood pressure regulation through regulation of intracellular calcium concentration and nitric oxide production leading to regulation of vascular smooth muscle cells vasoconstriction. Positively regulates bone mineralization through absorption of calcium from the intestine. Plays dual roles in osteoclast differentiation and survival by regulating RANKL-induced calcium oscillations in preosteoclasts and mediating calcium extrusion in mature osteoclasts. Regulates insulin sensitivity through calcium/calmodulin signaling pathway by regulating AKT1 activation and NOS3 activation in endothelial cells. May play a role in synaptic transmission by modulating calcium and proton dynamics at the synaptic vesicles. In Rattus norvegicus (Rat), this protein is Plasma membrane calcium-transporting ATPase 1.